Here is a 343-residue protein sequence, read N- to C-terminus: 4-hydroxy-3-methylbut-2-enyl diphosphate reductase (343 aa).

Position 18 (Cys-18) interacts with [4Fe-4S] cluster. 2 residues coordinate (2E)-4-hydroxy-3-methylbut-2-enyl diphosphate: His-47 and His-83. His-47 and His-83 together coordinate dimethylallyl diphosphate. His-47 and His-83 together coordinate isopentenyl diphosphate. Cys-105 contacts [4Fe-4S] cluster. His-133 is a binding site for (2E)-4-hydroxy-3-methylbut-2-enyl diphosphate. His-133 contributes to the dimethylallyl diphosphate binding site. Isopentenyl diphosphate is bound at residue His-133. Catalysis depends on Glu-135, which acts as the Proton donor. Residue Thr-174 coordinates (2E)-4-hydroxy-3-methylbut-2-enyl diphosphate. Cys-204 contributes to the [4Fe-4S] cluster binding site. Ser-232, Ser-233, Asn-234, and Ser-277 together coordinate (2E)-4-hydroxy-3-methylbut-2-enyl diphosphate. Ser-232, Ser-233, Asn-234, and Ser-277 together coordinate dimethylallyl diphosphate. Isopentenyl diphosphate contacts are provided by Ser-232, Ser-233, Asn-234, and Ser-277.

Belongs to the IspH family. [4Fe-4S] cluster serves as cofactor.

The catalysed reaction is isopentenyl diphosphate + 2 oxidized [2Fe-2S]-[ferredoxin] + H2O = (2E)-4-hydroxy-3-methylbut-2-enyl diphosphate + 2 reduced [2Fe-2S]-[ferredoxin] + 2 H(+). The enzyme catalyses dimethylallyl diphosphate + 2 oxidized [2Fe-2S]-[ferredoxin] + H2O = (2E)-4-hydroxy-3-methylbut-2-enyl diphosphate + 2 reduced [2Fe-2S]-[ferredoxin] + 2 H(+). It functions in the pathway isoprenoid biosynthesis; dimethylallyl diphosphate biosynthesis; dimethylallyl diphosphate from (2E)-4-hydroxy-3-methylbutenyl diphosphate: step 1/1. It participates in isoprenoid biosynthesis; isopentenyl diphosphate biosynthesis via DXP pathway; isopentenyl diphosphate from 1-deoxy-D-xylulose 5-phosphate: step 6/6. In terms of biological role, catalyzes the conversion of 1-hydroxy-2-methyl-2-(E)-butenyl 4-diphosphate (HMBPP) into a mixture of isopentenyl diphosphate (IPP) and dimethylallyl diphosphate (DMAPP). Acts in the terminal step of the DOXP/MEP pathway for isoprenoid precursor biosynthesis. This chain is 4-hydroxy-3-methylbut-2-enyl diphosphate reductase, found in Bartonella henselae (strain ATCC 49882 / DSM 28221 / CCUG 30454 / Houston 1) (Rochalimaea henselae).